Consider the following 281-residue polypeptide: Arylamine N-acetyltransferase (281 aa).

Residue cysteine 69 is the Acyl-thioester intermediate of the active site. Catalysis depends on residues histidine 107 and aspartate 122. N6-acetyllysine occurs at positions 214 and 281.

The protein belongs to the arylamine N-acetyltransferase family. As to quaternary structure, homodimer. Acetylated on Lys-214 and Lys-281. Deacetylated by CobB.

The protein localises to the cytoplasm. The enzyme catalyses an arylamine + acetyl-CoA = an N-acetylarylamine + CoA. The catalysed reaction is an N-hydroxyarylamine + acetyl-CoA = an N-acetoxyarylamine + CoA. With respect to regulation, inhibited by salicylic acid, acetylsalicylic acid, 2,6-dichrolo-4-nitrophenol, N-ethylmaleimide and iodoacetamide. In terms of biological role, catalyzes the acetyl-CoA-dependent N-acetylation of aromatic amines, and, probably, the O-acetylation of N-hydroxyarylamines. In vitro, catalyzes the N-acetylation of various arylamines such as aminobenzoic acid, aminophenol, aminotoluene, phenetidine, anisidine, aniline, isoniazid and 2-amino-fluorene. N-hydroxyarylamine O-acetyltransferase activity has not been assayed directly, however, NhoA activity is required for the mutagenicity of nitroaromatic compounds, suggesting that it also has O-acetyltransferase activity. The protein is Arylamine N-acetyltransferase (nhoA) of Escherichia coli (strain K12).